A 316-amino-acid polypeptide reads, in one-letter code: NAD kinase 1 (316 aa).

The active-site Proton acceptor is the aspartate 67. 67–68 (DG) contacts NAD(+). Residues 132–151 (RSAEERADAPTPLQQPDVED) form a disordered region. NAD(+) is bound by residues 160–161 (ND), arginine 190, and aspartate 192.

It belongs to the NAD kinase family. Requires a divalent metal cation as cofactor.

Its subcellular location is the cytoplasm. The enzyme catalyses NAD(+) + ATP = ADP + NADP(+) + H(+). Functionally, involved in the regulation of the intracellular balance of NAD and NADP, and is a key enzyme in the biosynthesis of NADP. Catalyzes specifically the phosphorylation on 2'-hydroxyl of the adenosine moiety of NAD to yield NADP. This Parasynechococcus marenigrum (strain WH8102) protein is NAD kinase 1.